The primary structure comprises 493 residues: Glutathione hydrolase 6 (493 aa).

Topologically, residues 1 to 54 (MERAEEPVVYQKLLPWEPSLESEEEVEEEETSEALVLNPRRHQDSSRNKAGGLP) are cytoplasmic. The interval 19–52 (SLESEEEVEEEETSEALVLNPRRHQDSSRNKAGG) is disordered. Residues 20 to 32 (LESEEEVEEEETS) are compositionally biased toward acidic residues. A helical; Signal-anchor for type II membrane protein transmembrane segment spans residues 55-75 (GTWARVVAALLLLAVGCSLAV). The Extracellular segment spans residues 76–493 (RQLQNQGRST…PHACCPFQGF (418 aa)). The disordered stretch occupies residues 83–105 (RSTGSLGSVAPPPGGHSHGPGVY). 2 N-linked (GlcNAc...) asparagine glycosylation sites follow: N161 and N370. Low complexity predominate over residues 442–455 (PPTQAQHQHQGQQE). The interval 442–464 (PPTQAQHQHQGQQEPTEHPSTCG) is disordered.

Belongs to the gamma-glutamyltransferase family. In terms of assembly, heterodimer composed of the light and heavy chains. The active site is located in the light chain. Post-translationally, cleaved by autocatalysis into a large and a small subunit and the autocatalytic cleavage is essential to the functional activation of the enzyme.

The protein resides in the membrane. It catalyses the reaction an N-terminal (5-L-glutamyl)-[peptide] + an alpha-amino acid = 5-L-glutamyl amino acid + an N-terminal L-alpha-aminoacyl-[peptide]. The enzyme catalyses glutathione + H2O = L-cysteinylglycine + L-glutamate. It carries out the reaction an S-substituted glutathione + H2O = an S-substituted L-cysteinylglycine + L-glutamate. Its pathway is sulfur metabolism; glutathione metabolism. Its function is as follows. Hydrolyzes and transfers gamma-glutamyl moieties from glutathione and other gamma-glutamyl compounds to acceptors. This chain is Glutathione hydrolase 6, found in Homo sapiens (Human).